A 203-amino-acid chain; its full sequence is uncharacterized protein (203 aa).

A PilZ domain is found at 90 to 188 (EKRQHVRVQP…YENIIGRYVM (99 aa)).

It to A.aeolicus aq_820 and aq_1583.

This is an uncharacterized protein from Aquifex aeolicus (strain VF5).